Here is a 287-residue protein sequence, read N- to C-terminus: AA9 family lytic polysaccharide monooxygenase D (287 aa).

Residues 1–17 (MKLSLLAAAAIAPMVSA) form the signal peptide. Position 18 (His-18) interacts with Cu(2+). A disulfide bridge connects residues Cys-67 and Cys-189. Position 176 (His-176) interacts with O2. Tyr-186 lines the Cu(2+) pocket. Asn-220 and Asn-250 each carry an N-linked (GlcNAc...) asparagine glycan. The tract at residues 239 to 287 (TGGSGSSTGSYNESNAEDSNEYPYQKESGTCQSNFYRREHARDFSHRRA) is disordered. Basic and acidic residues predominate over residues 274-287 (YRREHARDFSHRRA).

The protein belongs to the polysaccharide monooxygenase AA9 family. It depends on Cu(2+) as a cofactor.

The protein localises to the secreted. It carries out the reaction [(1-&gt;4)-beta-D-glucosyl]n+m + reduced acceptor + O2 = 4-dehydro-beta-D-glucosyl-[(1-&gt;4)-beta-D-glucosyl]n-1 + [(1-&gt;4)-beta-D-glucosyl]m + acceptor + H2O.. In terms of biological role, lytic polysaccharide monooxygenase (LPMO) that depolymerizes crystalline and amorphous polysaccharides via the oxidation of scissile alpha- or beta-(1-4)-glycosidic bonds, yielding C1 oxidation products. Catalysis by LPMOs requires the reduction of the active-site copper from Cu(II) to Cu(I) by a reducing agent and H(2)O(2) or O(2) as a cosubstrate. Active on celluloseas as well as on the hemicellulose xyloglucan. Shows synergy with other hydrolases in degrading sorghum stover. This is AA9 family lytic polysaccharide monooxygenase D from Emericella nidulans (strain FGSC A4 / ATCC 38163 / CBS 112.46 / NRRL 194 / M139) (Aspergillus nidulans).